The following is a 285-amino-acid chain: UPF0173 metal-dependent hydrolase Pnuc_1524 (285 aa).

It belongs to the UPF0173 family.

The sequence is that of UPF0173 metal-dependent hydrolase Pnuc_1524 from Polynucleobacter asymbioticus (strain DSM 18221 / CIP 109841 / QLW-P1DMWA-1) (Polynucleobacter necessarius subsp. asymbioticus).